The following is a 74-amino-acid chain: DNA-directed RNA polymerase subunit omega (74 aa).

It belongs to the RNA polymerase subunit omega family. In terms of assembly, the RNAP catalytic core consists of 2 alpha, 1 beta, 1 beta' and 1 omega subunit. When a sigma factor is associated with the core the holoenzyme is formed, which can initiate transcription.

It catalyses the reaction RNA(n) + a ribonucleoside 5'-triphosphate = RNA(n+1) + diphosphate. Functionally, promotes RNA polymerase assembly. Latches the N- and C-terminal regions of the beta' subunit thereby facilitating its interaction with the beta and alpha subunits. The chain is DNA-directed RNA polymerase subunit omega from Helicobacter pylori (strain P12).